The following is a 42-amino-acid chain: Photosystem II reaction center protein J (42 aa).

The helical transmembrane segment at 10–30 (IPLWLVLTIIGLAAIALLALF) threads the bilayer.

The protein belongs to the PsbJ family. PSII is composed of 1 copy each of membrane proteins PsbA, PsbB, PsbC, PsbD, PsbE, PsbF, PsbH, PsbI, PsbJ, PsbK, PsbL, PsbM, PsbT, PsbY, PsbZ, Psb30/Ycf12, at least 3 peripheral proteins of the oxygen-evolving complex and a large number of cofactors. It forms dimeric complexes.

The protein localises to the plastid. It is found in the chloroplast thylakoid membrane. In terms of biological role, this protein is a component of the reaction center of photosystem II. Functionally, one of the components of the core complex of photosystem II (PSII). PSII is a light-driven water:plastoquinone oxidoreductase that uses light energy to abstract electrons from H(2)O, generating O(2) and a proton gradient subsequently used for ATP formation. It consists of a core antenna complex that captures photons, and an electron transfer chain that converts photonic excitation into a charge separation. The sequence is that of Photosystem II reaction center protein J from Euglena gracilis.